Reading from the N-terminus, the 416-residue chain is RNA polymerase sigma-C factor (416 aa).

The short motif at 205-218 (DLVQEGTLGLERAV) is the Polymerase core binding element. Residues 374–393 (LAEIGRALDLSRERVRQIES) constitute a DNA-binding region (H-T-H motif).

It belongs to the sigma-70 factor family.

Sigma factors are initiation factors that promote the attachment of RNA polymerase to specific initiation sites and are then released. In Nostoc sp. (strain PCC 7120 / SAG 25.82 / UTEX 2576), this protein is RNA polymerase sigma-C factor (sigC).